Reading from the N-terminus, the 224-residue chain is Flagellar L-ring protein (224 aa).

The first 15 residues, methionine 1 to alanine 15, serve as a signal peptide directing secretion. Residue cysteine 16 is the site of N-palmitoyl cysteine attachment. Cysteine 16 carries S-diacylglycerol cysteine lipidation.

This sequence belongs to the FlgH family. As to quaternary structure, the basal body constitutes a major portion of the flagellar organelle and consists of four rings (L,P,S, and M) mounted on a central rod.

The protein localises to the cell outer membrane. It localises to the bacterial flagellum basal body. Functionally, assembles around the rod to form the L-ring and probably protects the motor/basal body from shearing forces during rotation. The chain is Flagellar L-ring protein from Shewanella baltica (strain OS223).